We begin with the raw amino-acid sequence, 504 residues long: Cytochrome P450 2D1 (504 aa).

Cys446 contributes to the heme binding site.

This sequence belongs to the cytochrome P450 family. The cofactor is heme.

The protein resides in the endoplasmic reticulum membrane. It localises to the microsome membrane. The catalysed reaction is an organic molecule + reduced [NADPH--hemoprotein reductase] + O2 = an alcohol + oxidized [NADPH--hemoprotein reductase] + H2O + H(+). Cytochromes P450 are a group of heme-thiolate monooxygenases. In liver microsomes, this enzyme is involved in an NADPH-dependent electron transport pathway. It oxidizes a variety of structurally unrelated compounds, including steroids, fatty acids, and xenobiotics. The polypeptide is Cytochrome P450 2D1 (Cyp2d1) (Rattus norvegicus (Rat)).